A 194-amino-acid polypeptide reads, in one-letter code: Ribose 1,5-bisphosphate phosphokinase PhnN (194 aa).

24 to 31 (GPSGAGKD) serves as a coordination point for ATP.

This sequence belongs to the ribose 1,5-bisphosphokinase family.

It catalyses the reaction alpha-D-ribose 1,5-bisphosphate + ATP = 5-phospho-alpha-D-ribose 1-diphosphate + ADP. Its pathway is metabolic intermediate biosynthesis; 5-phospho-alpha-D-ribose 1-diphosphate biosynthesis; 5-phospho-alpha-D-ribose 1-diphosphate from D-ribose 5-phosphate (route II): step 3/3. In terms of biological role, catalyzes the phosphorylation of ribose 1,5-bisphosphate to 5-phospho-D-ribosyl alpha-1-diphosphate (PRPP). This is Ribose 1,5-bisphosphate phosphokinase PhnN from Rhodopseudomonas palustris (strain ATCC BAA-98 / CGA009).